The following is a 464-amino-acid chain: UDP-N-acetylmuramoylalanine--D-glutamate ligase (464 aa).

112–118 serves as a coordination point for ATP; it reads GTDGKTT.

It belongs to the MurCDEF family.

It localises to the cytoplasm. The enzyme catalyses UDP-N-acetyl-alpha-D-muramoyl-L-alanine + D-glutamate + ATP = UDP-N-acetyl-alpha-D-muramoyl-L-alanyl-D-glutamate + ADP + phosphate + H(+). It functions in the pathway cell wall biogenesis; peptidoglycan biosynthesis. Functionally, cell wall formation. Catalyzes the addition of glutamate to the nucleotide precursor UDP-N-acetylmuramoyl-L-alanine (UMA). This is UDP-N-acetylmuramoylalanine--D-glutamate ligase from Pelodictyon phaeoclathratiforme (strain DSM 5477 / BU-1).